A 71-amino-acid chain; its full sequence is MSQYSQNQSSGAYPTPPVSTGPYMTPPPLGYPTSDISHATVAPVETKSKGDGFLKGCLAAMCCCCVLDACF.

The segment covering 1-12 (MSQYSQNQSSGA) has biased composition (polar residues). Positions 1–31 (MSQYSQNQSSGAYPTPPVSTGPYMTPPPLGY) are disordered. Positions 14-30 (PTPPVSTGPYMTPPPLG) are enriched in pro residues. A helical transmembrane segment spans residues 48–64 (SKGDGFLKGCLAAMCCC).

The protein belongs to the CYSTM1 family. As to quaternary structure, heterodimers. Interacts with CYSTM6, CYSTM7, CYSTM12 and WIH1/CYSTM13. As to expression, mostly expressed in roots, stems, rosette leaves and siliques and, to a lower extent, in flowers and cauline leaves.

The protein resides in the cell membrane. Its subcellular location is the cytoplasm. Functionally, involved in resistance to abiotic stress. The protein is Protein CYSTEINE-RICH TRANSMEMBRANE MODULE 4 of Arabidopsis thaliana (Mouse-ear cress).